The following is a 312-amino-acid chain: Dihydroorotate dehydrogenase B (NAD(+)), catalytic subunit (312 aa).

Residues S23 and 47 to 48 contribute to the FMN site; that span reads KA. Residues K47 and 71–75 each bind substrate; that span reads NAIGL. 2 residues coordinate FMN: N102 and N130. N130 is a binding site for substrate. The Nucleophile role is filled by C133. The FMN site is built by K168 and I194. 195-196 lines the substrate pocket; the sequence is NT. Residues G220, 246–247, and 268–269 each bind FMN; these read GG and GT.

This sequence belongs to the dihydroorotate dehydrogenase family. Type 1 subfamily. Heterotetramer of 2 PyrK and 2 PyrD type B subunits. FMN is required as a cofactor.

Its subcellular location is the cytoplasm. It catalyses the reaction (S)-dihydroorotate + NAD(+) = orotate + NADH + H(+). It functions in the pathway pyrimidine metabolism; UMP biosynthesis via de novo pathway; orotate from (S)-dihydroorotate (NAD(+) route): step 1/1. Catalyzes the conversion of dihydroorotate to orotate with NAD(+) as electron acceptor. In Enterococcus faecalis (strain ATCC 47077 / OG1RF), this protein is Dihydroorotate dehydrogenase B (NAD(+)), catalytic subunit (pyrDB).